We begin with the raw amino-acid sequence, 697 residues long: Elongation factor G 1 (697 aa).

The 276-residue stretch at 8–283 folds into the tr-type G domain; it reads ERYRNFGIMA…AVVDFLPSPV (276 aa). Residues 17 to 24, 81 to 85, and 135 to 138 each bind GTP; these read AHIDAGKT, DTPGH, and NKMD.

This sequence belongs to the TRAFAC class translation factor GTPase superfamily. Classic translation factor GTPase family. EF-G/EF-2 subfamily.

The protein localises to the cytoplasm. In terms of biological role, catalyzes the GTP-dependent ribosomal translocation step during translation elongation. During this step, the ribosome changes from the pre-translocational (PRE) to the post-translocational (POST) state as the newly formed A-site-bound peptidyl-tRNA and P-site-bound deacylated tRNA move to the P and E sites, respectively. Catalyzes the coordinated movement of the two tRNA molecules, the mRNA and conformational changes in the ribosome. This is Elongation factor G 1 from Anaeromyxobacter dehalogenans (strain 2CP-C).